The chain runs to 99 residues: Large ribosomal subunit protein bL28 (99 aa).

The tract at residues 1 to 25 (MSRKCAVTGKGVQTGNNVSHANNKS) is disordered. Over residues 11-22 (GVQTGNNVSHAN) the composition is skewed to polar residues.

It belongs to the bacterial ribosomal protein bL28 family.

The polypeptide is Large ribosomal subunit protein bL28 (Rhodospirillum centenum (strain ATCC 51521 / SW)).